We begin with the raw amino-acid sequence, 88 residues long: Small ribosomal subunit protein uS15 (88 aa).

Belongs to the universal ribosomal protein uS15 family. As to quaternary structure, part of the 30S ribosomal subunit. Forms a bridge to the 50S subunit in the 70S ribosome, contacting the 23S rRNA.

One of the primary rRNA binding proteins, it binds directly to 16S rRNA where it helps nucleate assembly of the platform of the 30S subunit by binding and bridging several RNA helices of the 16S rRNA. In terms of biological role, forms an intersubunit bridge (bridge B4) with the 23S rRNA of the 50S subunit in the ribosome. This Sorangium cellulosum (strain So ce56) (Polyangium cellulosum (strain So ce56)) protein is Small ribosomal subunit protein uS15.